Consider the following 297-residue polypeptide: Putative peptidyl-prolyl cis-trans isomerase YacD (297 aa).

The first 32 residues, 1–32, serve as a signal peptide directing secretion; sequence MKSRTIWTIILGALLVCCIAVAYTLTKSQAGA. A PpiC domain is found at 154-247; that stretch reads DDSYRIRHIV…NGYAIIQLKE (94 aa).

The enzyme catalyses [protein]-peptidylproline (omega=180) = [protein]-peptidylproline (omega=0). The protein is Putative peptidyl-prolyl cis-trans isomerase YacD (yacD) of Bacillus subtilis (strain 168).